The chain runs to 206 residues: LexA repressor (206 aa).

Positions 28 to 48 (RAEIATRLGFKSANAAEEHLK) form a DNA-binding region, H-T-H motif. Catalysis depends on for autocatalytic cleavage activity residues Ser123 and Lys160.

Belongs to the peptidase S24 family. Homodimer.

The enzyme catalyses Hydrolysis of Ala-|-Gly bond in repressor LexA.. Its function is as follows. Represses a number of genes involved in the response to DNA damage (SOS response), including recA and lexA. In the presence of single-stranded DNA, RecA interacts with LexA causing an autocatalytic cleavage which disrupts the DNA-binding part of LexA, leading to derepression of the SOS regulon and eventually DNA repair. This chain is LexA repressor, found in Shewanella sp. (strain MR-7).